Here is a 269-residue protein sequence, read N- to C-terminus: 15-hydroxyprostaglandin dehydrogenase [NAD(+)] (269 aa).

Residues 12–20 (GAAQGIGKA), 36–37 (DW), 63–65 (CDV), and N91 each bind NAD(+). Substrate-binding residues include S138 and Q148. The active-site Proton acceptor is Y151. NAD(+) is bound by residues 151-155 (YCASK) and 186-188 (VDT).

It belongs to the short-chain dehydrogenases/reductases (SDR) family. In terms of assembly, homodimer. In terms of tissue distribution, expressed in proximal convoluted tubules of the kidney, where it colocalizes with the prostaglandin transporter SLC22A22 (at protein level). Expressed in lung, intestine, stomach and liver.

Its subcellular location is the cytoplasm. It catalyses the reaction prostaglandin E2 + NAD(+) = 15-oxoprostaglandin E2 + NADH + H(+). The enzyme catalyses (15S)-hydroxy-(5Z,8Z,11Z,13E)-eicosatetraenoate + NAD(+) = 15-oxo-(5Z,8Z,11Z,13E)-eicosatetraenoate + NADH + H(+). The catalysed reaction is (11R)-hydroxy-(5Z,8Z,12E,14Z)-eicosatetraenoate + NAD(+) = 11-oxo-(5Z,8Z,12E,14Z)-eicosatetraenoate + NADH + H(+). It carries out the reaction lipoxin A4 + NAD(+) = 15-oxo-(5S,6R)-dihydroxy-(7E,9E,11Z,13E)-eicosatetraenoate + NADH + H(+). It catalyses the reaction 15-oxo-(5S,6R)-dihydroxy-(7E,9E,11Z)-eicosatrienoate + NADH + H(+) = (5S,6R,15S)-trihydroxy-(7E,9E,11Z)-eicosatrienoate + NAD(+). The enzyme catalyses prostaglandin A1 + NAD(+) = 15-oxo-prostaglandin A1 + NADH + H(+). The catalysed reaction is prostaglandin E1 + NAD(+) = 15-oxoprostaglandin E1 + NADH + H(+). It carries out the reaction 14-hydroxy-(4Z,7Z,10Z,12E,16Z,19Z)-docosahexaenoate + NAD(+) = 14-oxo-(4Z,7Z,10Z,12E,16Z,19Z)-docosahexaenoate + NADH + H(+). It catalyses the reaction resolvin E1 + NAD(+) = 18-oxo-resolvin E1 + NADH + H(+). The enzyme catalyses resolvin D1 + NAD(+) = 8-oxoresolvin D1 + NADH + H(+). The catalysed reaction is resolvin D1 + NAD(+) = 17-oxoresolvin D1 + NADH + H(+). It carries out the reaction resolvin D2 + NAD(+) = 7-oxoresolvin D2 + NADH + H(+). It catalyses the reaction resolvin D2 + NAD(+) = 16-oxoresolvin D2 + NADH + H(+). In terms of biological role, catalyzes the NAD-dependent dehydrogenation (oxidation) of a broad array of hydroxylated polyunsaturated fatty acids (mainly eicosanoids and docosanoids, including prostaglandins, lipoxins and resolvins), yielding their corresponding keto (oxo) metabolites. Decreases the levels of the pro-proliferative prostaglandins such as prostaglandin E2 (whose activity is increased in cancer because of an increase in the expression of cyclooxygenase 2) and generates oxo-fatty acid products that can profoundly influence cell function by abrogating pro-inflammatory cytokine expression. Converts resolvins E1, D1 and D2 to their oxo products, which represents a mode of resolvin inactivation. Resolvin E1 plays important roles during the resolution phase of acute inflammation, while resolvins D1 and D2 have a unique role in obesity-induced adipose inflammation. In Mus musculus (Mouse), this protein is 15-hydroxyprostaglandin dehydrogenase [NAD(+)] (Hpgd).